The following is a 131-amino-acid chain: Small ribosomal subunit protein bS6 (131 aa).

Residues Thr97–Glu131 are disordered. Positions Lys104–Glu131 are enriched in basic and acidic residues.

The protein belongs to the bacterial ribosomal protein bS6 family.

Its function is as follows. Binds together with bS18 to 16S ribosomal RNA. In Shewanella baltica (strain OS223), this protein is Small ribosomal subunit protein bS6.